The sequence spans 673 residues: DNA ligase (673 aa).

An NAD(+)-binding site is contributed by D34–D38. The disordered stretch occupies residues L54–A73. NAD(+)-binding positions include S83 to L84 and E114. The active-site N6-AMP-lysine intermediate is the K116. NAD(+)-binding residues include R137, E176, K292, and K316. Residues C410, C413, C428, and C433 each coordinate Zn(2+). Residues P594–G673 enclose the BRCT domain.

The protein belongs to the NAD-dependent DNA ligase family. LigA subfamily. Requires Mg(2+) as cofactor. The cofactor is Mn(2+).

The catalysed reaction is NAD(+) + (deoxyribonucleotide)n-3'-hydroxyl + 5'-phospho-(deoxyribonucleotide)m = (deoxyribonucleotide)n+m + AMP + beta-nicotinamide D-nucleotide.. In terms of biological role, DNA ligase that catalyzes the formation of phosphodiester linkages between 5'-phosphoryl and 3'-hydroxyl groups in double-stranded DNA using NAD as a coenzyme and as the energy source for the reaction. It is essential for DNA replication and repair of damaged DNA. The sequence is that of DNA ligase from Symbiobacterium thermophilum (strain DSM 24528 / JCM 14929 / IAM 14863 / T).